Here is a 330-residue protein sequence, read N- to C-terminus: G-protein coupled bile acid receptor 1 (330 aa).

Residues 1 to 19 (MTPNSTGEVPSPIPKGALG) lie on the Extracellular side of the membrane. Asparagine 4 carries an N-linked (GlcNAc...) asparagine glycan. Residues 20-40 (LSLALASLIITANLLLALGIA) traverse the membrane as a helical segment. The Cytoplasmic portion of the chain corresponds to 41 to 50 (WDRRLRSPPA). The chain crosses the membrane as a helical span at residues 51–71 (GCFFLSLLLAGLLTGLALPTL). Residues 72–85 (PGLWNQSRRGYWSC) lie on the Extracellular side of the membrane. The N-linked (GlcNAc...) asparagine glycan is linked to asparagine 76. A disulfide bond links cysteine 85 and cysteine 155. Residues 86–106 (LLVYLAPNFSFLSLLANLLLV) traverse the membrane as a helical segment. At 107–125 (HGERYMAVLRPLQPPGSIR) the chain is on the cytoplasmic side. Residues 126-146 (LALLLTWAGPLLFASLPALGW) traverse the membrane as a helical segment. Topologically, residues 147 to 165 (NHWTPGANCSSQAIFPAPY) are extracellular. A helical membrane pass occupies residues 166 to 186 (LYLEVYGLLLPAVGAAAFLSV). Topologically, residues 187-228 (RVLATAHRQLQDICRLERAVCRDEPSALARALTWRQARAQAG) are cytoplasmic. The helical transmembrane segment at 229–249 (AMLLFGLCWGPYVATLLLSVL) threads the bilayer. Over 250-261 (AYEQRPPLGPGT) the chain is Extracellular. The helical transmembrane segment at 262 to 282 (LLSLLSLGSASAAAVPVAMGL) threads the bilayer. The Cytoplasmic segment spans residues 283–330 (GDQRYTAPWRAAAQRCLQGLWGRASRDSPGPSIAYHPSSQSSVDLDLN). A disordered region spans residues 309–330 (DSPGPSIAYHPSSQSSVDLDLN). A compositionally biased stretch (polar residues) spans 319–330 (PSSQSSVDLDLN).

Belongs to the G-protein coupled receptor 1 family. Ubiquitously expressed. Expressed at higher level in spleen and placenta. Expressed at lower level in other tissues. In digestive tissues, it is expressed in stomach, duodenum, ileocecum, ileum, jejunum, ascending colon, transverse colon, descending colon, cecum and liver, but not in esophagus and rectum.

It is found in the cell membrane. In terms of biological role, receptor for bile acid. Bile acid-binding induces its internalization, activation of extracellular signal-regulated kinase and intracellular cAMP production. May be involved in the suppression of macrophage functions by bile acids. This Homo sapiens (Human) protein is G-protein coupled bile acid receptor 1 (GPBAR1).